Reading from the N-terminus, the 593-residue chain is Tyrosine-protein phosphatase non-receptor type 11 (593 aa).

T2 carries the post-translational modification N-acetylthreonine. SH2 domains are found at residues 6 to 102 and 112 to 216; these read WFHP…KYPL and WFHG…KQPL. Phosphotyrosine occurs at positions 62 and 66. Positions 247–517 constitute a Tyrosine-protein phosphatase domain; that stretch reads FWEEFETLQQ…EAQYRFIYMA (271 aa). Substrate-binding positions include D425, 459–465, and Q506; that span reads CSAGIGR. Catalysis depends on C459, which acts as the Phosphocysteine intermediate. 2 positions are modified to phosphotyrosine; by PDGFR: Y542 and Y580.

Belongs to the protein-tyrosine phosphatase family. Non-receptor class 2 subfamily. Interacts with phosphorylated SIT1, LIME1, BCAR3 and MZPL1. Interacts with FCRL4, FCRL6, ANKHD1, SHB, INPP5D/SHIP1 and CD84. Interacts with MILR1 (tyrosine-phosphorylated). Interacts with FLT1 (tyrosine-phosphorylated), FLT3 (tyrosine-phosphorylated), FLT4 (tyrosine-phosphorylated), KIT and GRB2. Interacts with PTPNS1. Interacts with KIR2DL1; the interaction is enhanced by ARRB2. Interacts (via SH2 domain) with TEK/TIE2 (tyrosine phosphorylated). Interacts with GAB2. Interacts with TERT; the interaction retains TERT in the nucleus. Interacts with PECAM1 and FER. Interacts with EPHA2 (activated); participates in PTK2/FAK1 dephosphorylation in EPHA2 downstream signaling. Interacts with PDGFRA (tyrosine phosphorylated). Interacts with PDGFRB (tyrosine phosphorylated); this interaction increases the PTPN11 phosphatase activity. Interacts with ROS1; this mediates PTPN11 phosphorylation. Interacts with CEACAM1 (via cytoplasmic domain); this interaction depends on the monomer/dimer equilibrium and is phosphorylation-dependent. Interacts with MPIG6B (via ITIM motif). Interacts with SIGLEC10. Interacts with CLEC12B (via ITIM motif); this interaction triggers dephosphorylation and activation of PTPN11. Interacts (via SH2 domains) with NEDD9/CAS-L; the interaction is enhanced when NEDD9/CAS-L is tyrosine phosphorylated. In terms of processing, phosphorylated on Tyr-542 and Tyr-580 upon receptor protein tyrosine kinase activation; which creates a binding site for GRB2 and other SH2-containing proteins. Phosphorylated upon activation of the receptor-type kinase FLT3. Phosphorylated upon activation of the receptor-type kinase PDGFRA. Phosphorylated by activated PDGFRB. Expressed in brain, muscle and lung.

It localises to the cytoplasm. It catalyses the reaction O-phospho-L-tyrosyl-[protein] + H2O = L-tyrosyl-[protein] + phosphate. With respect to regulation, inhibited by orthovanadate, molybdate and spermidine. Acts downstream of various receptor and cytoplasmic protein tyrosine kinases to participate in the signal transduction from the cell surface to the nucleus. Positively regulates MAPK signal transduction pathway. Dephosphorylates GAB1, ARHGAP35 and EGFR. Dephosphorylates ROCK2 at 'Tyr-722' resulting in stimulation of its RhoA binding activity. Dephosphorylates CDC73. Dephosphorylates SOX9 on tyrosine residues, leading to inactivate SOX9 and promote ossification. Dephosphorylates tyrosine-phosphorylated NEDD9/CAS-L. In Rattus norvegicus (Rat), this protein is Tyrosine-protein phosphatase non-receptor type 11 (Ptpn11).